Here is a 636-residue protein sequence, read N- to C-terminus: Putative lipase ATG15 (636 aa).

At 1–19 (MYKYGTVVDPAMTTNRRSR) the chain is on the cytoplasmic side. The helical; Signal-anchor for type II membrane protein transmembrane segment at 20 to 42 (LSGFRCASTARVTATLLLSFLAF) threads the bilayer. Over 43-636 (SPSSASSDFG…DDLEFATDEM (594 aa)) the chain is Lumenal. Residues Asn211, Asn233, Asn291, Asn315, and Asn477 are each glycosylated (N-linked (GlcNAc...) asparagine). The interval 478-500 (GTETTTTSSPSTTSTTRTRTRTS) is disordered. Low complexity predominate over residues 479–500 (TETTTTSSPSTTSTTRTRTRTS).

It belongs to the AB hydrolase superfamily. Lipase family. Binds to both phosphatidylinositol (PI) and phosphatidylinositol 3,5-bisphosphate (PIP2).

The protein resides in the endosome. Its subcellular location is the multivesicular body membrane. It localises to the prevacuolar compartment membrane. It carries out the reaction a triacylglycerol + H2O = a diacylglycerol + a fatty acid + H(+). Lipase which is essential for lysis of subvacuolar cytoplasm to vacuole targeted bodies and intravacuolar autophagic bodies. Involved in the lysis of intravacuolar multivesicular body (MVB) vesicles. The intravacuolar membrane disintegration by ATG15 is critical to life span extension. Autophagy is required for proper vegetative growth, asexual/sexual reproduction, and full virulence. Autophagy is particularly involved in the biosynthesis of deoxynivalenol (DON), an important virulence determinant. The protein is Putative lipase ATG15 of Gibberella zeae (strain ATCC MYA-4620 / CBS 123657 / FGSC 9075 / NRRL 31084 / PH-1) (Wheat head blight fungus).